We begin with the raw amino-acid sequence, 223 residues long: UPF0441 protein KPK_0672 (223 aa).

The interval 165–223 is disordered; the sequence is SYGAAQPGRTMNVPKTAMAPKPATTTTVTRGGFGESVAKQSTMQRSAAGSTSSSRSMGG. Low complexity-rich tracts occupy residues 177 to 193 and 209 to 223; these read VPKT…TTVT and RSAA…SMGG.

Belongs to the UPF0441 family.

In Klebsiella pneumoniae (strain 342), this protein is UPF0441 protein KPK_0672.